We begin with the raw amino-acid sequence, 828 residues long: Translation initiation factor IF-2 (828 aa).

Disordered stretches follow at residues 48–76 (SYSG…SEEF) and 112–137 (ASQE…EPKI). Residues 49-58 (YSGSTTTLSL) are compositionally biased toward polar residues. Over residues 65–74 (LETGSSSGSE) the composition is skewed to low complexity. The span at 116 to 126 (DPIEVEQEESS) shows a compositional bias: acidic residues. Residues 127–137 (DTNKVKEEPKI) are compositionally biased toward basic and acidic residues. A tr-type G domain is found at 326–496 (SRAPVVTVMG…LLIAEMQNLK (171 aa)). The segment at 335 to 342 (GHVDHGKT) is G1. 335 to 342 (GHVDHGKT) provides a ligand contact to GTP. Residues 360–364 (GITQH) form a G2 region. A G3 region spans residues 382-385 (DTPG). Residues 382–386 (DTPGH) and 436–439 (NKID) each bind GTP. A G4 region spans residues 436 to 439 (NKID). Positions 472–474 (SAL) are G5.

Belongs to the TRAFAC class translation factor GTPase superfamily. Classic translation factor GTPase family. IF-2 subfamily.

It is found in the cytoplasm. Functionally, one of the essential components for the initiation of protein synthesis. Protects formylmethionyl-tRNA from spontaneous hydrolysis and promotes its binding to the 30S ribosomal subunits. Also involved in the hydrolysis of GTP during the formation of the 70S ribosomal complex. The chain is Translation initiation factor IF-2 from Rickettsia bellii (strain RML369-C).